The sequence spans 416 residues: Phosphoglycerate kinase 2 (416 aa).

Substrate-binding positions include 28–30 (DMN), R44, 65–68 (HQSR), R122, and R162. ATP is bound by residues E337 and 362 to 365 (GGHI).

The protein belongs to the phosphoglycerate kinase family. In terms of assembly, monomer.

It is found in the cytoplasm. It carries out the reaction (2R)-3-phosphoglycerate + ATP = (2R)-3-phospho-glyceroyl phosphate + ADP. It participates in carbohydrate degradation; glycolysis; pyruvate from D-glyceraldehyde 3-phosphate: step 2/5. This chain is Phosphoglycerate kinase 2, found in Methanosarcina acetivorans (strain ATCC 35395 / DSM 2834 / JCM 12185 / C2A).